The following is a 434-amino-acid chain: Autophagy-related protein 18 (434 aa).

3 WD repeats span residues 1–34 (MNYVTFNQDYSCLAVGTAKGFRIYHTEPFSKIFT), 183–223 (AHRA…KLYQ), and 228–267 (TYPSSIFSLSFNMSSTLLCVSSNSDTIHIFRLGGPVTGLP). The L/FRRG motif signature appears at 224–228 (FRRGT). The interval 262-318 (PVTGLPESPQSPGDKDKWRRSRSFDSENGSPPAGISPGSEMADVPAEKSKSSGTFGS) is disordered. The segment covering 274–286 (GDKDKWRRSRSFD) has biased composition (basic and acidic residues). Residues 367-407 (PRSGPVKSVVAMSSSSPQVMVVTSDGGFYIYSIDMETGGEG) form a WD 4 repeat.

The protein belongs to the WD repeat PROPPIN family. In terms of assembly, component of the PI(3,5)P2 regulatory complex.

The protein resides in the preautophagosomal structure membrane. Its subcellular location is the vacuole membrane. It is found in the endosome membrane. Functionally, the PI(3,5)P2 regulatory complex regulates both the synthesis and turnover of phosphatidylinositol 3,5-bisphosphate (PtdIns(3,5)P2). Necessary for proper vacuole morphology. Plays an important role in osmotically-induced vacuole fragmentation. Required for cytoplasm to vacuole transport (Cvt) vesicle formation, pexophagy and starvation-induced autophagy. Involved in correct atg9 trafficking to the pre-autophagosomal structure. Might also be involved in premeiotic DNA replication. The polypeptide is Autophagy-related protein 18 (atg18) (Botryotinia fuckeliana (strain B05.10) (Noble rot fungus)).